A 548-amino-acid chain; its full sequence is Esterase-5A (548 aa).

The first 19 residues, M1–A19, serve as a signal peptide directing secretion. The cysteines at positions 87 and 106 are disulfide-linked. Residues N95 and N116 are each glycosylated (N-linked (GlcNAc...) asparagine). The Acyl-ester intermediate role is filled by S210. A disulfide bridge connects residues C262 and C274. N-linked (GlcNAc...) asparagine glycosylation occurs at N479. C518 and C539 are disulfide-bonded.

It belongs to the type-B carboxylesterase/lipase family.

Its subcellular location is the secreted. The enzyme catalyses a carboxylic ester + H2O = an alcohol + a carboxylate + H(+). This Drosophila persimilis (Fruit fly) protein is Esterase-5A (Est-5A).